Reading from the N-terminus, the 249-residue chain is UDP-N-acetyl-D-mannosaminuronic acid transferase (249 aa).

It belongs to the glycosyltransferase 26 family.

It carries out the reaction UDP-N-acetyl-alpha-D-mannosaminouronate + N-acetyl-alpha-D-glucosaminyl-di-trans,octa-cis-undecaprenyl diphosphate = beta-D-ManNAcA-(1-&gt;4)-alpha-D-GlcNAc-di-trans,octa-cis-undecaprenyl diphosphate + UDP + H(+). It participates in bacterial outer membrane biogenesis; enterobacterial common antigen biosynthesis. Its function is as follows. Catalyzes the synthesis of Und-PP-GlcNAc-ManNAcA (Lipid II), the second lipid-linked intermediate involved in enterobacterial common antigen (ECA) synthesis. The sequence is that of UDP-N-acetyl-D-mannosaminuronic acid transferase from Pectobacterium carotovorum subsp. carotovorum (strain PC1).